Reading from the N-terminus, the 465-residue chain is Chromosomal replication initiator protein DnaA (465 aa).

The segment at 1–72 (MRTKQLWQVA…ETLSLLLGRP (72 aa)) is domain I, interacts with DnaA modulators. A domain II region spans residues 72 to 117 (PIAVHFTVHGQDDEEHPVQRRPQRRALASEEGSASKQLSLTPSPEH). The disordered stretch occupies residues 80-118 (HGQDDEEHPVQRRPQRRALASEEGSASKQLSLTPSPEHG). The span at 103–113 (GSASKQLSLTP) shows a compositional bias: polar residues. A domain III, AAA+ region region spans residues 118-334 (GLNPRYTFEK…GALNRIVALA (217 aa)). Positions 162, 164, 165, and 166 each coordinate ATP. Residues 335–465 (QLTHQPITLA…DAKAPLASRH (131 aa)) form a domain IV, binds dsDNA region.

Belongs to the DnaA family. In terms of assembly, oligomerizes as a right-handed, spiral filament on DNA at oriC.

The protein localises to the cytoplasm. Its function is as follows. Plays an essential role in the initiation and regulation of chromosomal replication. ATP-DnaA binds to the origin of replication (oriC) to initiate formation of the DNA replication initiation complex once per cell cycle. Binds the DnaA box (a 9 base pair repeat at the origin) and separates the double-stranded (ds)DNA. Forms a right-handed helical filament on oriC DNA; dsDNA binds to the exterior of the filament while single-stranded (ss)DNA is stabiized in the filament's interior. The ATP-DnaA-oriC complex binds and stabilizes one strand of the AT-rich DNA unwinding element (DUE), permitting loading of DNA polymerase. After initiation quickly degrades to an ADP-DnaA complex that is not apt for DNA replication. Binds acidic phospholipids. This is Chromosomal replication initiator protein DnaA from Thermomicrobium roseum (strain ATCC 27502 / DSM 5159 / P-2).